The sequence spans 159 residues: Photosystem I reaction center subunit XI (159 aa).

3 consecutive transmembrane segments (helical) span residues 53–73, 84–104, and 125–145; these read LEIGMAHGYFLIGPWVKLGPL, LISGIALILIATACLAAYGIV, and FTAGFFVGATGGAFVAFTLLE.

The protein belongs to the PsaL family.

It localises to the cellular thylakoid membrane. The polypeptide is Photosystem I reaction center subunit XI (Cyanothece sp. (strain PCC 7425 / ATCC 29141)).